A 429-amino-acid polypeptide reads, in one-letter code: Serum response factor-binding protein 1 (429 aa).

Ala2 is modified (N-acetylalanine). 2 coiled-coil regions span residues 42-67 (KGTE…AMKE) and 108-146 (LLKK…NHSE). Disordered regions lie at residues 131–157 (AEVE…NGSN) and 176–429 (LAKK…TFDD). Positions 146–157 (ENTLYSNDNGSN) are enriched in polar residues. Basic and acidic residues predominate over residues 183–195 (NSKEKIAKMEHGP). Lys190 is covalently cross-linked (Glycyl lysine isopeptide (Lys-Gly) (interchain with G-Cter in SUMO2)). Residues Ser203, Ser205, Ser264, Ser279, and Ser281 each carry the phosphoserine modification. The segment covering 249–265 (GGEEFCEEEKEYFDDST) has biased composition (acidic residues). Residues 296–341 (KESSCHSSVKEQKPLEKVFLKEDTGETHGDTRNDKIKPSTETRKLE) show a composition bias toward basic and acidic residues. A Glycyl lysine isopeptide (Lys-Gly) (interchain with G-Cter in SUMO2) cross-link involves residue Lys316. Phosphoserine occurs at positions 349, 351, and 367. A compositionally biased stretch (basic and acidic residues) spans 357-367 (NFKEQAPKTRS). Residues 373 to 383 (NEPQIKNQFNK) are compositionally biased toward polar residues.

In terms of assembly, interacts with SRF. Forms complexes with SRF and SRF cofactors ARID2, MYOCD and NKX2-5. Interacts with the N-terminus of SLC2A4. In terms of tissue distribution, abundantly expressed in heart and skeletal muscle, and at much lower levels in brain and lung.

Its subcellular location is the cytoplasm. It is found in the perinuclear region. In terms of biological role, may be involved in regulating transcriptional activation of cardiac genes during the aging process. May play a role in biosynthesis and/or processing of SLC2A4 in adipose cells. The protein is Serum response factor-binding protein 1 of Homo sapiens (Human).